A 488-amino-acid chain; its full sequence is Ribulose bisphosphate carboxylase large chain (488 aa).

Substrate is bound by residues Asn-127 and Thr-177. The Proton acceptor role is filled by Lys-179. Lys-181 lines the substrate pocket. The Mg(2+) site is built by Lys-205, Asp-207, and Glu-208. Lys-205 is subject to N6-carboxylysine. His-297 acts as the Proton acceptor in catalysis. Positions 298, 330, and 382 each coordinate substrate.

Belongs to the RuBisCO large chain family. Type I subfamily. In terms of assembly, heterohexadecamer of 8 large chains and 8 small chains. It depends on Mg(2+) as a cofactor.

The protein localises to the plastid. It is found in the chloroplast. It catalyses the reaction 2 (2R)-3-phosphoglycerate + 2 H(+) = D-ribulose 1,5-bisphosphate + CO2 + H2O. It carries out the reaction D-ribulose 1,5-bisphosphate + O2 = 2-phosphoglycolate + (2R)-3-phosphoglycerate + 2 H(+). Functionally, ruBisCO catalyzes two reactions: the carboxylation of D-ribulose 1,5-bisphosphate, the primary event in carbon dioxide fixation, as well as the oxidative fragmentation of the pentose substrate in the photorespiration process. Both reactions occur simultaneously and in competition at the same active site. In Pyropia dentata (Red alga), this protein is Ribulose bisphosphate carboxylase large chain (rbcL).